Here is a 293-residue protein sequence, read N- to C-terminus: Ribosomal protein L11 methyltransferase (293 aa).

4 residues coordinate S-adenosyl-L-methionine: threonine 145, glycine 166, aspartate 188, and asparagine 230.

It belongs to the methyltransferase superfamily. PrmA family.

The protein localises to the cytoplasm. The catalysed reaction is L-lysyl-[protein] + 3 S-adenosyl-L-methionine = N(6),N(6),N(6)-trimethyl-L-lysyl-[protein] + 3 S-adenosyl-L-homocysteine + 3 H(+). Its function is as follows. Methylates ribosomal protein L11. This is Ribosomal protein L11 methyltransferase from Escherichia coli O8 (strain IAI1).